We begin with the raw amino-acid sequence, 228 residues long: Protein Thf1 (228 aa).

Positions 201–223 form a coiled coil; that stretch reads IKRSKEVVDELSQTERRKREERA. The segment at 209–228 is disordered; it reads DELSQTERRKREERAVSQPG.

Belongs to the THF1 family.

In terms of biological role, may be involved in photosynthetic membrane biogenesis. In Gloeobacter violaceus (strain ATCC 29082 / PCC 7421), this protein is Protein Thf1.